The following is a 2193-amino-acid chain: Protein sidekick-1 (2193 aa).

The span at 1-23 (MARARPSVAGGGVAAPPERAGPG) shows a compositional bias: low complexity. Residues 1-56 (MARARPSVAGGGVAAPPERAGPGRPRRSRTGHHCDPECPGLRAAPRTPGPGAGRRA) form a disordered region. 5 Ig-like C2-type domains span residues 86–168 (PYFK…SEIQ), 173–259 (GNFM…SPFI), 275–363 (PIIV…AFLS), 368–458 (PYFT…LDVT), and 462–551 (PAFT…AMLT). A disulfide bridge connects residues C108 and C151. N-linked (GlcNAc...) asparagine glycosylation is found at N123, N253, and N283. 3 cysteine pairs are disulfide-bonded: C297–C344, C390–C440, and C483–C535. N532, N545, and N554 each carry an N-linked (GlcNAc...) asparagine glycan. One can recognise an Ig-like C2-type 6 domain in the interval 556 to 645 (TSIVHPPEDR…GSDSRTARLE (90 aa)). The cysteines at positions 577 and 629 are disulfide-linked. Fibronectin type-III domains follow at residues 652-748 (PPQN…LPEE), 753-849 (PPKN…TLQG), 854-952 (PPQN…THED), 956-1050 (AVGH…VPPD), 1054-1153 (APSN…TLQA), 1158-1256 (APTS…TRES), 1261-1358 (APEN…TKDD), 1362-1456 (PPVR…TEKR), 1461-1558 (PPRE…TLQD), 1563-1681 (PPGS…VGEA), 1686-1782 (APQN…THQA), 1786-1881 (PPSF…AGPA), and 1884-1982 (SPGS…SAQA). N-linked (GlcNAc...) asparagine glycans are attached at residues N764, N803, N864, N997, and N1006. N-linked (GlcNAc...) asparagine glycosylation is found at N1264 and N1315. N1636, N1730, N1801, and N1875 each carry an N-linked (GlcNAc...) asparagine glycan. The helical transmembrane segment at 1992–2012 (FLLVMALSSLLLILLVVFVLV) threads the bilayer. Over 2013 to 2193 (LHGQSKKYKS…APLTGFSSFV (181 aa)) the chain is Cytoplasmic. The tract at residues 2057 to 2080 (STFSKKNGTRSPPRPSPGGLHYSD) is disordered. The PDZ-binding signature appears at 2187–2193 (TGFSSFV).

Belongs to the sidekick family. In terms of assembly, homodimer; mediates homophilic interactions to promote cell adhesion. Interacts (via PDZ-binding motif) with MAGI1, MAGI2, DLG2, DLG3 and DLG4. As to quaternary structure, does not mediate homophilic interactions. As to expression, expressed by non-overlapping subsets of retinal neurons. Sdk1 and Sdk2 are expressed in non-overlapping subsets of interneurons and retinal ganglion cells (RGCs) that form synapses in distinct inner plexiform layer (IPL) sublaminae (at protein level).

Its subcellular location is the cell membrane. It localises to the synapse. Adhesion molecule that promotes lamina-specific synaptic connections in the retina. Expressed in specific subsets of interneurons and retinal ganglion cells (RGCs) and promotes synaptic connectivity via homophilic interactions. This Mus musculus (Mouse) protein is Protein sidekick-1.